Here is a 242-residue protein sequence, read N- to C-terminus: Probable inactive serine protease 58 (242 aa).

Positions methionine 1 to threonine 17 are cleaved as a signal peptide. Residues phenylalanine 18 to glutamine 240 form the Peptidase S1 domain. 4 disulfide bridges follow: cysteine 41-cysteine 57, cysteine 134-cysteine 202, cysteine 166-cysteine 181, and cysteine 192-cysteine 216. Asparagine 157 carries an N-linked (GlcNAc...) asparagine glycan.

The protein belongs to the peptidase S1 family.

It is found in the secreted. This Bos taurus (Bovine) protein is Probable inactive serine protease 58 (PRSS58).